A 312-amino-acid chain; its full sequence is Olfactory receptor 1500 (312 aa).

The Extracellular segment spans residues Met1–Leu25. N-linked (GlcNAc...) asparagine glycosylation occurs at Asn5. Residues Leu26 to Val49 form a helical membrane-spanning segment. At Arg50–Met57 the chain is on the cytoplasmic side. Residues Pro58–Pro79 traverse the membrane as a helical segment. The Extracellular segment spans residues Lys80–Gln100. Cys97 and Cys189 are disulfide-bonded. The chain crosses the membrane as a helical span at residues Leu101–Tyr120. Over Asp121–Lys139 the chain is Cytoplasmic. A helical transmembrane segment spans residues Phe140 to Leu158. Topologically, residues His159 to Glu196 are extracellular. Residues Leu197–Val219 form a helical membrane-spanning segment. Residues Arg220–Lys236 are Cytoplasmic-facing. Residues Val237–Leu260 form a helical membrane-spanning segment. Residues Cys261–Ile272 lie on the Extracellular side of the membrane. A helical transmembrane segment spans residues Ala273–Leu292. Over Arg293 to Leu312 the chain is Cytoplasmic.

This sequence belongs to the G-protein coupled receptor 1 family. Olfactory epithelium.

The protein resides in the cell membrane. Functionally, odorant receptor. The protein is Olfactory receptor 1500 (Olr1500) of Rattus norvegicus (Rat).